The chain runs to 147 residues: Elongation factor Tu (147 aa).

This sequence belongs to the GTP-binding elongation factor family. EF-Tu/EF-1A subfamily. In terms of assembly, monomer.

Its subcellular location is the cytoplasm. In terms of biological role, this protein promotes the GTP-dependent binding of aminoacyl-tRNA to the A-site of ribosomes during protein biosynthesis. The polypeptide is Elongation factor Tu (tuf) (Fructilactobacillus sanfranciscensis (Lactobacillus sanfranciscensis)).